Consider the following 652-residue polypeptide: UvrABC system protein C (652 aa).

One can recognise a GIY-YIG domain in the interval 19–96 (KTSGVYLWKD…IKKHKPRYNI (78 aa)). Positions 203–238 (EDVSGTLKEKMKEAAEKKEFEKAARLRDGIQAVYAL) constitute a UVR domain.

The protein belongs to the UvrC family. As to quaternary structure, interacts with UvrB in an incision complex.

It is found in the cytoplasm. The UvrABC repair system catalyzes the recognition and processing of DNA lesions. UvrC both incises the 5' and 3' sides of the lesion. The N-terminal half is responsible for the 3' incision and the C-terminal half is responsible for the 5' incision. The polypeptide is UvrABC system protein C (Treponema denticola (strain ATCC 35405 / DSM 14222 / CIP 103919 / JCM 8153 / KCTC 15104)).